We begin with the raw amino-acid sequence, 365 residues long: Isopentenyl-diphosphate delta-isomerase (365 aa).

Residue 8–9 coordinates substrate; it reads RK. Residues 67-69, Ser97, and Asn126 each bind FMN; that span reads SIT. 97–99 lines the substrate pocket; sequence SQR. Gln160 contributes to the substrate binding site. Residue Glu161 participates in Mg(2+) binding. FMN is bound by residues Lys192, Thr222, 272–274, and 293–294; these read GIR and AL.

Belongs to the IPP isomerase type 2 family. As to quaternary structure, homooctamer. Dimer of tetramers. FMN serves as cofactor. The cofactor is NADPH. Requires Mg(2+) as cofactor.

It localises to the cytoplasm. It carries out the reaction isopentenyl diphosphate = dimethylallyl diphosphate. In terms of biological role, involved in the biosynthesis of isoprenoids. Catalyzes the 1,3-allylic rearrangement of the homoallylic substrate isopentenyl (IPP) to its allylic isomer, dimethylallyl diphosphate (DMAPP). The sequence is that of Isopentenyl-diphosphate delta-isomerase from Methanosarcina barkeri (strain Fusaro / DSM 804).